We begin with the raw amino-acid sequence, 388 residues long: Chorismate synthase (388 aa).

NADP(+) contacts are provided by Arg-39 and Arg-45. FMN is bound by residues 132 to 134, 251 to 252, Gly-296, 311 to 315, and Arg-337; these read RSS, NA, and KPIPT.

Belongs to the chorismate synthase family. Homotetramer. FMNH2 serves as cofactor.

It carries out the reaction 5-O-(1-carboxyvinyl)-3-phosphoshikimate = chorismate + phosphate. The protein operates within metabolic intermediate biosynthesis; chorismate biosynthesis; chorismate from D-erythrose 4-phosphate and phosphoenolpyruvate: step 7/7. Its function is as follows. Catalyzes the anti-1,4-elimination of the C-3 phosphate and the C-6 proR hydrogen from 5-enolpyruvylshikimate-3-phosphate (EPSP) to yield chorismate, which is the branch point compound that serves as the starting substrate for the three terminal pathways of aromatic amino acid biosynthesis. This reaction introduces a second double bond into the aromatic ring system. In Staphylococcus aureus (strain Mu50 / ATCC 700699), this protein is Chorismate synthase.